The sequence spans 672 residues: tRNA 5-methylaminomethyl-2-thiouridine biosynthesis bifunctional protein MnmC (672 aa).

The interval 1-241 (MLKVTTAHIH…KRECLQGFKP (241 aa)) is tRNA (mnm(5)s(2)U34)-methyltransferase. An FAD-dependent cmnm(5)s(2)U34 oxidoreductase region spans residues 271 to 672 (IGGGISSLFS…RKLLKGTPVK (402 aa)).

The protein in the N-terminal section; belongs to the methyltransferase superfamily. tRNA (mnm(5)s(2)U34)-methyltransferase family. It in the C-terminal section; belongs to the DAO family. Requires FAD as cofactor.

The protein localises to the cytoplasm. It catalyses the reaction 5-aminomethyl-2-thiouridine(34) in tRNA + S-adenosyl-L-methionine = 5-methylaminomethyl-2-thiouridine(34) in tRNA + S-adenosyl-L-homocysteine + H(+). Functionally, catalyzes the last two steps in the biosynthesis of 5-methylaminomethyl-2-thiouridine (mnm(5)s(2)U) at the wobble position (U34) in tRNA. Catalyzes the FAD-dependent demodification of cmnm(5)s(2)U34 to nm(5)s(2)U34, followed by the transfer of a methyl group from S-adenosyl-L-methionine to nm(5)s(2)U34, to form mnm(5)s(2)U34. The chain is tRNA 5-methylaminomethyl-2-thiouridine biosynthesis bifunctional protein MnmC from Mannheimia succiniciproducens (strain KCTC 0769BP / MBEL55E).